A 392-amino-acid chain; its full sequence is MASKRHVGLNIRKKDEPKAAPIRVSSVFGDDDDDDNVPATATNMASASVIRVQKAAEREHQKAEAEDPTIFDYDGNYDEIQAIKNEKKEEARKADKNRESKYAENIIKAHARRQLEQFSREERQQLREREKEGDEFDDKEVFVTGAYRKQQEEVKKHREQEAEEAAFNDMTSVQKQKLWEIGMGRTLLNDLARDPTAIKQRKKEQKNVRKREDSDEEIDPKPEKSDKKPAEKLKKSIYSDDSDEEKAPKPPQKNFEGDLKPGLNTVSKKKATTHAERIRQRNYTPTPPSSDDEGARAPRARRRTSSPSPTSRKSIESRESGSRRSPEGKSEKSEKAPKISLKDKLKPKKIDKEARLDGLKEILKQRNTEEDIEAARQRYFERKEQGIVVPPL.

Disordered stretches follow at residues 1–73, 113–169, and 187–357; these read MASK…IFDY, RQLE…AFND, and LLND…ARLD. Composition is skewed to basic and acidic residues over residues 54 to 65, 113 to 132, 149 to 160, 205 to 238, and 313 to 357; these read KAAEREHQKAEA, RQLE…REKE, KQQEEVKKHREQ, QKNV…KSIY, and KSIE…ARLD. A coiled-coil region spans residues 76-132; that stretch reads NYDEIQAIKNEKKEEARKADKNRESKYAENIIKAHARRQLEQFSREERQQLREREKE.

Belongs to the NSRP1 family. As to expression, expressed in the intestine, nervous system and head neurons in both larvae and adults. Expressed in the distal tip cell.

It is found in the cytoplasm. The protein localises to the nucleus. Its function is as follows. Required for the cessation of distal tip cell migration at the end of larval morphogenesis. The protein is Nuclear speckle splicing regulatory protein 1 homolog (ccdc-55) of Caenorhabditis elegans.